We begin with the raw amino-acid sequence, 508 residues long: 25-hydroxyvitamin D-1 alpha hydroxylase, mitochondrial (508 aa).

Cys455 is a binding site for heme.

Belongs to the cytochrome P450 family. Heme serves as cofactor. As to expression, kidney.

The protein localises to the mitochondrion membrane. It catalyses the reaction calcidiol + 2 reduced [adrenodoxin] + O2 + 2 H(+) = calcitriol + 2 oxidized [adrenodoxin] + H2O. The catalysed reaction is secalciferol + 2 reduced [adrenodoxin] + O2 + 2 H(+) = calcitetrol + 2 oxidized [adrenodoxin] + H2O. The enzyme catalyses 25-hydroxy-24-oxocalciol + 2 reduced [adrenodoxin] + O2 + 2 H(+) = (1S)-1,25-dihydroxy-24-oxocalciol + 2 oxidized [adrenodoxin] + H2O. It carries out the reaction 25-hydroxyvitamin D2 + 2 reduced [adrenodoxin] + O2 + 2 H(+) = 1alpha,25-dihydroxyvitamin D2 + 2 oxidized [adrenodoxin] + H2O. Its pathway is hormone biosynthesis; vitamin D biosynthesis. Activated by cardiolipin and dioleoyl phosphatidylethanolamine (DOPE), phospholipids found in the inner mitochondrial membrane. Inhibited by high substrate concentration. Its function is as follows. A cytochrome P450 monooxygenase involved in vitamin D metabolism and in calcium and phosphorus homeostasis. Catalyzes the rate-limiting step in the activation of vitamin D in the kidney, namely the hydroxylation of 25-hydroxyvitamin D3/calcidiol at the C1alpha-position to form the hormonally active form of vitamin D3, 1alpha,25-dihydroxyvitamin D3/calcitriol that acts via the vitamin D receptor (VDR). Has 1alpha-hydroxylase activity on vitamin D intermediates of the CYP24A1-mediated inactivation pathway. Converts 24R,25-dihydroxyvitamin D3/secalciferol to 1-alpha,24,25-trihydroxyvitamin D3, an active ligand of VDR. Also active on 25-hydroxyvitamin D2. Mechanistically, uses molecular oxygen inserting one oxygen atom into a substrate, and reducing the second into a water molecule, with two electrons provided by NADPH via FDXR/adrenodoxin reductase and FDX1/adrenodoxin. In Homo sapiens (Human), this protein is 25-hydroxyvitamin D-1 alpha hydroxylase, mitochondrial (CYP27B1).